A 210-amino-acid polypeptide reads, in one-letter code: Uracil phosphoribosyltransferase (210 aa).

5-phospho-alpha-D-ribose 1-diphosphate-binding positions include Arg78, Arg103, and Asp130 to Thr138. Uracil-binding positions include Ile193 and Gly198–Ala200. Asp199 serves as a coordination point for 5-phospho-alpha-D-ribose 1-diphosphate.

The protein belongs to the UPRTase family. The cofactor is Mg(2+).

The enzyme catalyses UMP + diphosphate = 5-phospho-alpha-D-ribose 1-diphosphate + uracil. The protein operates within pyrimidine metabolism; UMP biosynthesis via salvage pathway; UMP from uracil: step 1/1. Allosterically activated by GTP. Functionally, catalyzes the conversion of uracil and 5-phospho-alpha-D-ribose 1-diphosphate (PRPP) to UMP and diphosphate. The polypeptide is Uracil phosphoribosyltransferase (Xanthomonas axonopodis pv. citri (strain 306)).